Reading from the N-terminus, the 171-residue chain is uncharacterized protein (171 aa).

The protein belongs to the transferase hexapeptide repeat family.

This is an uncharacterized protein from Bacillus subtilis (strain 168).